Here is a 644-residue protein sequence, read N- to C-terminus: Threonine--tRNA ligase (644 aa).

The 62-residue stretch at 3-64 (EMIRITFPDG…QEDGSISIIT (62 aa)) folds into the TGS domain. The tract at residues 245-542 (DHRKLGKELE…LIEEYKGAFP (298 aa)) is catalytic. The Zn(2+) site is built by C338, H389, and H519.

This sequence belongs to the class-II aminoacyl-tRNA synthetase family. In terms of assembly, homodimer. It depends on Zn(2+) as a cofactor.

It localises to the cytoplasm. The enzyme catalyses tRNA(Thr) + L-threonine + ATP = L-threonyl-tRNA(Thr) + AMP + diphosphate + H(+). In terms of biological role, catalyzes the attachment of threonine to tRNA(Thr) in a two-step reaction: L-threonine is first activated by ATP to form Thr-AMP and then transferred to the acceptor end of tRNA(Thr). Also edits incorrectly charged L-seryl-tRNA(Thr). The polypeptide is Threonine--tRNA ligase (Geobacillus sp. (strain WCH70)).